The primary structure comprises 498 residues: uncharacterized protein (498 aa).

3 disordered regions span residues 1-48, 99-134, and 190-209; these read MSND…ARPK, NDLHPLDNDSTRTSKTLKNSSEVLTASKLTDEGNSK, and NSENSNVNNGSSLNGNTSSN. The segment covering 35–44 has biased composition (polar residues); the sequence is ELSTPKQVNQ. A compositionally biased stretch (basic and acidic residues) spans 99 to 110; it reads NDLHPLDNDSTR. Polar residues predominate over residues 111-126; it reads TSKTLKNSSEVLTASK.

This is an uncharacterized protein from Schizosaccharomyces pombe (strain 972 / ATCC 24843) (Fission yeast).